We begin with the raw amino-acid sequence, 382 residues long: V-type proton ATPase subunit C 1 (382 aa).

An N-acetylthreonine modification is found at T2.

Belongs to the V-ATPase C subunit family. V-ATPase is a heteromultimeric enzyme made up of two complexes: the ATP-hydrolytic V1 complex and the proton translocation V0 complex. The V1 complex consists of three catalytic AB heterodimers that form a heterohexamer, three peripheral stalks each consisting of EG heterodimers, one central rotor including subunits D and F, and the regulatory subunits C and H. The proton translocation complex V0 consists of the proton transport subunit a, a ring of proteolipid subunits c9c'', rotary subunit d, subunits e and f, and two accessory subunits.

Its function is as follows. Subunit of the V1 complex of vacuolar(H+)-ATPase (V-ATPase), a multisubunit enzyme composed of a peripheral complex (V1) that hydrolyzes ATP and a membrane integral complex (V0) that translocates protons. V-ATPase is responsible for acidifying and maintaining the pH of intracellular compartments and in some cell types, is targeted to the plasma membrane, where it is responsible for acidifying the extracellular environment. Subunit C is necessary for the assembly of the catalytic sector of the enzyme and is likely to have a specific function in its catalytic activity. This is V-type proton ATPase subunit C 1 (atp6v1c1) from Xenopus tropicalis (Western clawed frog).